The following is a 691-amino-acid chain: Two-component response regulator ORR21 (691 aa).

The region spanning 17 to 132 (KVLVVDDDPT…ELKNIWQHVI (116 aa)) is the Response regulatory domain. D68 is modified (4-aspartylphosphate). Residues 139 to 155 (NKEHEHSGSLDDTDRTR) are compositionally biased toward basic and acidic residues. Disordered stretches follow at residues 139 to 204 (NKEH…KKPR) and 616 to 647 (SHPG…HGFV). Positions 199–258 (TSKKPRVVWSVELHQQFVNAVNHLGIDKAVPKKILELMNVPGLTRENVASHLQKFRLYLK) form a DNA-binding region, myb-like GARP. Over residues 616 to 628 (SHPGSSSSSFQSS) the composition is skewed to low complexity.

Belongs to the ARR family. Type-B subfamily. In terms of processing, two-component system major event consists of a His-to-Asp phosphorelay between a sensor histidine kinase (HK) and a response regulator (RR). In plants, the His-to-Asp phosphorelay involves an additional intermediate named Histidine-containing phosphotransfer protein (HPt). This multistep phosphorelay consists of a His-Asp-His-Asp sequential transfer of a phosphate group between first a His and an Asp of the HK protein, followed by the transfer to a conserved His of the HPt protein and finally the transfer to an Asp in the receiver domain of the RR protein.

The protein localises to the nucleus. Transcriptional activator that binds specific DNA sequence. Functions as a response regulator involved in His-to-Asp phosphorelay signal transduction system. Phosphorylation of the Asp residue in the receiver domain activates the ability of the protein to promote the transcription of target genes. May directly activate some type-A response regulators in response to cytokinins. In Oryza sativa subsp. indica (Rice), this protein is Two-component response regulator ORR21.